The sequence spans 436 residues: [Pyruvate dehydrogenase (acetyl-transferring)] kinase isozyme 1, mitochondrial (436 aa).

A mitochondrion-targeting transit peptide spans 1–28; sequence MRLARLLRGAALAGPGPGLRAAGFSRSF. Position 136 is a phosphotyrosine; by FGFR1 (Tyr-136). The Histidine kinase domain maps to 163–393; the sequence is YKESFGVDPV…DAVIYIKALS (231 aa). The residue at position 243 (Tyr-243) is a Phosphotyrosine; by FGFR1, ABL1, FLT3 and JAK2. A Phosphotyrosine; by FGFR1 modification is found at Tyr-244. ATP-binding positions include 279–286, Asp-318, 337–338, and 354–359; these read ELFKNAMR, ST, and GFGYGL. Thr-338 is modified (phosphothreonine). At Lys-405 the chain carries N6-succinyllysine.

This sequence belongs to the PDK/BCKDK protein kinase family. Homodimer, and heterodimer with PDK2. Interacts with the pyruvate dehydrogenase complex subunit DLAT, and is part of the multimeric pyruvate dehydrogenase complex that contains multiple copies of pyruvate dehydrogenase (E1), dihydrolipoamide acetyltransferase (DLAT, E2) and lipoamide dehydrogenase (DLD, E3). Interacts with phosphoglycerate kinase PGK1; the interaction is direct, occurs under hypoxic conditions and leads to PDK1-mediated inhibition of pyruvate dehydrogenase complex activity. Phosphorylated by constitutively activated ABL1, FGFR1, FLT3 and JAK2 (in vitro), and this may also occur in cancer cells that express constitutively activated ABL1, FGFR1, FLT3 and JAK2. Phosphorylation at Tyr-243 and Tyr-244 strongly increases kinase activity, while phosphorylation at Tyr-136 has a lesser effect. Phosphorylated under hypoxic conditions at Thr-338 by phosphoglycerate kinase PGK1 which has an activating effect. In terms of tissue distribution, expressed predominantly in the heart. Detected at lower levels in liver, skeletal muscle and pancreas.

It localises to the mitochondrion matrix. It catalyses the reaction L-seryl-[pyruvate dehydrogenase E1 alpha subunit] + ATP = O-phospho-L-seryl-[pyruvate dehydrogenase E1 alpha subunit] + ADP + H(+). Its activity is regulated as follows. Activity is enhanced by binding to the pyruvate dehydrogenase subunit DLAT. Inhibited by AZD7545; this compound interferes with DLAT binding and thereby inhibits kinase activity. Inhibited by dichloroacetate and radicicol. Activated under hypoxic conditions by phosphoglycerate kinase PGK1-mediated phosphorylation at Thr-338. Functionally, kinase that plays a key role in regulation of glucose and fatty acid metabolism and homeostasis via phosphorylation of the pyruvate dehydrogenase subunits PDHA1 and PDHA2. This inhibits pyruvate dehydrogenase activity, and thereby regulates metabolite flux through the tricarboxylic acid cycle, down-regulates aerobic respiration and inhibits the formation of acetyl-coenzyme A from pyruvate. Plays an important role in cellular responses to hypoxia and is important for cell proliferation under hypoxia. In Homo sapiens (Human), this protein is [Pyruvate dehydrogenase (acetyl-transferring)] kinase isozyme 1, mitochondrial (PDK1).